Consider the following 98-residue polypeptide: MSSYKYYDLIRKPIITEKTTALSEQNKYAFYVDKFAAKLTVKKAIEEIFKVKVKKVNILNVKGKNKRFKGIIGTQINRKKAIVTLEKDNNIDFAGGIK.

It belongs to the universal ribosomal protein uL23 family. Part of the 50S ribosomal subunit. Contacts protein L29, and trigger factor when it is bound to the ribosome.

In terms of biological role, one of the early assembly proteins it binds 23S rRNA. One of the proteins that surrounds the polypeptide exit tunnel on the outside of the ribosome. Forms the main docking site for trigger factor binding to the ribosome. This Rickettsia canadensis (strain McKiel) protein is Large ribosomal subunit protein uL23.